Consider the following 961-residue polypeptide: Endochitinase A (961 aa).

A signal peptide spans 1–21 (MAPKLFTFVSALSGLASLASA). Residues 28 to 339 (SNIAVYYGQG…EKIREILYDL (312 aa)) form the GH18 domain. The active-site Proton donor is the glutamate 175. Disordered stretches follow at residues 338–720 (DLDP…TTTE), 767–787 (TDVP…TADI), 813–842 (PPAT…GEVS), and 912–933 (HVPV…ASPT). A compositionally biased stretch (pro residues) spans 342–355 (NHPPPTTSPTPTPT). Low complexity-rich tracts occupy residues 356 to 510 (PSTT…STSS), 519 to 544 (SSTS…PVIS), 552 to 604 (TSSS…PETT), and 612 to 635 (TPGS…PATS). Positions 636–665 (GGHTETSTVSTSSANQTPSASTSKPLIPTN) are enriched in polar residues. Low complexity predominate over residues 666–720 (SASSTSTGSVTSTPSAPGVPSSSAGSDETATTSTTDSEPTSTSSGSVTAKPTTTE). A lipid anchor (GPI-anchor amidated glycine) is attached at glycine 936. Residues 937 to 961 (AGSRYDVVKGVPALVALALSLLAVL) constitute a propeptide, removed in mature form.

It belongs to the glycosyl hydrolase 18 family. Chitinase class III subfamily. O-glycosylated but not N-glycosylated.

The protein localises to the cell membrane. The protein resides in the secreted. It localises to the cell wall. Its subcellular location is the cell tip. It catalyses the reaction Random endo-hydrolysis of N-acetyl-beta-D-glucosaminide (1-&gt;4)-beta-linkages in chitin and chitodextrins.. Its function is as follows. GPI-anchored chitinase involved in the degradation of chitin, a component of the cell walls of fungi and exoskeletal elements of some animals (including worms and arthropods). Required to reshape the cell wall at the sites where cell wall remodeling and/or cell wall maturation actively take place such as sites of conidia formation. The chain is Endochitinase A (chiA) from Emericella nidulans (Aspergillus nidulans).